The sequence spans 168 residues: MVEFVNPKSLGELEENVVAINRVTKVVKGGRRLRFAALVVVGDKQGHVGFGTGKAQEVPEAIRKAIEDAKRKLITVPTVSTTIPHDVLGEWGGGKILVKPAEEGSGVAAGGAARSVMELAGIADVTAKSLGSATPINVIRATFDALTSLKDAEEVAKLRGVSLEHLAE.

The S5 DRBM domain maps to 13–76 (LEENVVAINR…EDAKRKLITV (64 aa)).

Belongs to the universal ribosomal protein uS5 family. In terms of assembly, part of the 30S ribosomal subunit. Contacts proteins S4 and S8.

Functionally, with S4 and S12 plays an important role in translational accuracy. In terms of biological role, located at the back of the 30S subunit body where it stabilizes the conformation of the head with respect to the body. The chain is Small ribosomal subunit protein uS5 from Leuconostoc mesenteroides subsp. mesenteroides (strain ATCC 8293 / DSM 20343 / BCRC 11652 / CCM 1803 / JCM 6124 / NCDO 523 / NBRC 100496 / NCIMB 8023 / NCTC 12954 / NRRL B-1118 / 37Y).